The sequence spans 393 residues: Riboflavin biosynthesis protein RibBA (393 aa).

The interval 1 to 200 (MQFDNIDSAL…IDDLIEYRKK (200 aa)) is DHBP synthase. D-ribulose 5-phosphate is bound by residues 27–28 (RE), Asp-32, 139–143 (RNGHT), and Glu-163. Position 28 (Glu-28) interacts with Mg(2+). His-142 provides a ligand contact to Mg(2+). The tract at residues 201–393 (LEPEIEFKAK…TKKIKMGHLI (193 aa)) is GTP cyclohydrolase II. 249–253 (RLHSA) provides a ligand contact to GTP. 3 residues coordinate Zn(2+): Cys-254, Cys-265, and Cys-267. GTP contacts are provided by residues Gln-270, 291–293 (EGR), and Thr-313. Asp-325 (proton acceptor; for GTP cyclohydrolase activity) is an active-site residue. Arg-327 functions as the Nucleophile; for GTP cyclohydrolase activity in the catalytic mechanism. GTP-binding residues include Ser-348 and Lys-353.

In the N-terminal section; belongs to the DHBP synthase family. It in the C-terminal section; belongs to the GTP cyclohydrolase II family. Requires Mg(2+) as cofactor. It depends on Mn(2+) as a cofactor. The cofactor is Zn(2+).

It carries out the reaction D-ribulose 5-phosphate = (2S)-2-hydroxy-3-oxobutyl phosphate + formate + H(+). It catalyses the reaction GTP + 4 H2O = 2,5-diamino-6-hydroxy-4-(5-phosphoribosylamino)-pyrimidine + formate + 2 phosphate + 3 H(+). The protein operates within cofactor biosynthesis; riboflavin biosynthesis; 2-hydroxy-3-oxobutyl phosphate from D-ribulose 5-phosphate: step 1/1. Its pathway is cofactor biosynthesis; riboflavin biosynthesis; 5-amino-6-(D-ribitylamino)uracil from GTP: step 1/4. Its function is as follows. Catalyzes the conversion of D-ribulose 5-phosphate to formate and 3,4-dihydroxy-2-butanone 4-phosphate. Catalyzes the conversion of GTP to 2,5-diamino-6-ribosylamino-4(3H)-pyrimidinone 5'-phosphate (DARP), formate and pyrophosphate. The chain is Riboflavin biosynthesis protein RibBA from Staphylococcus aureus (strain MRSA252).